The chain runs to 188 residues: Ribosome-recycling factor (188 aa).

This sequence belongs to the RRF family.

It localises to the cytoplasm. Responsible for the release of ribosomes from messenger RNA at the termination of protein biosynthesis. May increase the efficiency of translation by recycling ribosomes from one round of translation to another. This is Ribosome-recycling factor from Blochmanniella pennsylvanica (strain BPEN).